A 132-amino-acid polypeptide reads, in one-letter code: Small ribosomal subunit protein uS8 (132 aa).

The protein belongs to the universal ribosomal protein uS8 family. Part of the 30S ribosomal subunit. Contacts proteins S5 and S12.

Functionally, one of the primary rRNA binding proteins, it binds directly to 16S rRNA central domain where it helps coordinate assembly of the platform of the 30S subunit. In Bifidobacterium adolescentis (strain ATCC 15703 / DSM 20083 / NCTC 11814 / E194a), this protein is Small ribosomal subunit protein uS8.